A 122-amino-acid polypeptide reads, in one-letter code: MSDARTRKIEARLKEIVGDEVASLSDPRLKGLVTVTGVRVSPNLSHATVFYSLLAGGDPEEAREGLQSAAGRIQAAVGAQTRLKRTPRLRFEPDPTVERVTRIQRTLREVSGEDGDGNGTQE.

The segment covering 95–111 (PTVERVTRIQRTLREVS) has biased composition (basic and acidic residues). Residues 95–122 (PTVERVTRIQRTLREVSGEDGDGNGTQE) are disordered.

This sequence belongs to the RbfA family. As to quaternary structure, monomer. Binds 30S ribosomal subunits, but not 50S ribosomal subunits or 70S ribosomes.

It is found in the cytoplasm. Its function is as follows. One of several proteins that assist in the late maturation steps of the functional core of the 30S ribosomal subunit. Associates with free 30S ribosomal subunits (but not with 30S subunits that are part of 70S ribosomes or polysomes). Required for efficient processing of 16S rRNA. May interact with the 5'-terminal helix region of 16S rRNA. The sequence is that of Ribosome-binding factor A from Rubrobacter xylanophilus (strain DSM 9941 / JCM 11954 / NBRC 16129 / PRD-1).